The following is a 149-amino-acid chain: Transthyretin (149 aa).

The N-terminal stretch at 1 to 20 is a signal peptide; that stretch reads MAFHSLLLLCLAGLAFVSET. Cysteine 32 carries the post-translational modification Sulfocysteine. Lysine 37 serves as a coordination point for L-thyroxine. Glutamate 64 is modified (4-carboxyglutamate). 2 residues coordinate L-thyroxine: glutamate 76 and serine 139.

The protein belongs to the transthyretin family. In terms of assembly, homotetramer. Dimer of dimers. In the homotetramer, subunits assemble around a central channel that can accommodate two ligand molecules. Interacts with RBP4. In terms of processing, sulfonation of the reactive cysteine Cys-32 enhances the stability of the native conformation of TTR, avoiding misassembly of the protein leading to amyloid formation.

The protein localises to the secreted. Functionally, thyroid hormone-binding protein. Probably transports thyroxine from the bloodstream to the brain. The chain is Transthyretin (TTR) from Notamacropus eugenii (Tammar wallaby).